The primary structure comprises 57 residues: Large ribosomal subunit protein bL32 (57 aa).

The disordered stretch occupies residues 1–23 (MAVPKKKTSKSKRDKRRATWRHK).

Belongs to the bacterial ribosomal protein bL32 family.

The sequence is that of Large ribosomal subunit protein bL32 from Nostoc sp. (strain PCC 7120 / SAG 25.82 / UTEX 2576).